Consider the following 622-residue polypeptide: Auxin response factor 11 (622 aa).

Residues 145-247 (FVKILTASDT…DLRVGVRRLA (103 aa)) constitute a DNA-binding region (TF-B3). 2 disordered regions span residues 358-398 (SIQR…ISEI) and 483-513 (SNIS…TRSR). Polar residues-rich tracts occupy residues 376–387 (SALTPTPTQQQS) and 483–511 (SNIS…TSTR). The PB1 domain maps to 511–594 (RSRIKVQMQG…KKLFIYPSDE (84 aa)).

The protein belongs to the ARF family. In terms of assembly, homodimers and heterodimers.

Its subcellular location is the nucleus. Its function is as follows. Auxin response factors (ARFs) are transcriptional factors that bind specifically to the DNA sequence 5'-TGTCTC-3' found in the auxin-responsive promoter elements (AuxREs). Could act as transcriptional activator or repressor. Formation of heterodimers with Aux/IAA proteins may alter their ability to modulate early auxin response genes expression. The protein is Auxin response factor 11 (ARF11) of Arabidopsis thaliana (Mouse-ear cress).